Reading from the N-terminus, the 588-residue chain is CD166 antigen (588 aa).

An N-terminal signal peptide occupies residues 1 to 33 (MMEPPAAAARASCRRRPLLCLLLAALCMPPALG). 2 Ig-like V-type domains span residues 34 to 126 (LYTV…TEDD) and 131 to 240 (PTVV…KTIQ). At 34 to 532 (LYTVNAVYGD…NSEKVNDQAK (499 aa)) the chain is on the extracellular side. Disulfide bonds link Cys49–Cys119 and Cys163–Cys226. N-linked (GlcNAc...) asparagine glycosylation is found at Asn101, Asn173, Asn199, Asn271, Asn312, Asn366, Asn462, Asn485, and Asn504. Ig-like C2-type domains lie at 251 to 333 (PTEK…TTIT), 338 to 414 (DLQL…KTLK), and 421 to 501 (PQIK…RTVT). 3 cysteine pairs are disulfide-bonded: Cys276-Cys319, Cys359-Cys397, and Cys440-Cys490. A helical transmembrane segment spans residues 533–553 (LIVGIVVGLLLVALVAGVVYW). Over 554-588 (LYVKKSKTASKHVDKDLGNIEENKKLEENNHKSET) the chain is Cytoplasmic.

Homodimer. Interacts (via extracellular domain) with CD6 (via extracellular domain). Homodimerization and interaction with CD6 involve the same region and cannot occur simultaneously. The affinity for CD6 is much higher than the affinity for self-association. In terms of processing, glycosylated. Detected in embryo. Detected in embryonic spinal cord and embryonic brain. Within the spinal cord it is localized to axons in the dorsal funiculus, midline floor plate cells, and motoneurons. Detected in embryonic epithelia and brain. After hatching, detected in bursa of Fabricius and thymus. Detected on embryonic retinal ganglion cell axon growth cones (at protein level). Detected in embryonic retina and in the optic fiber layer, which is composed of retinal ganglion cell axons and their growth cones.

The protein resides in the cell membrane. It localises to the cell projection. The protein localises to the axon. Its subcellular location is the dendrite. Cell adhesion molecule that mediates both heterotypic cell-cell contacts via its interaction with CD6, as well as homotypic cell-cell contacts. Promotes T-cell activation and proliferation via its interactions with CD6. Contributes to the formation and maturation of the immunological synapse via its interactions with CD6. Mediates homotypic interactions with cells that express ALCAM. Mediates attachment of dendritic cells onto endothelial cells via homotypic interaction. Inhibits endothelial cell migration and promotes endothelial tube formation via homotypic interactions. Required for normal organization of the lymph vessel network. Required for normal hematopoietic stem cell engraftment in the bone marrow. Plays a role in hematopoiesis; required for normal numbers of hematopoietic stem cells in bone marrow. Promotes in vitro osteoblast proliferation and differentiation. Promotes neurite extension, axon growth and axon guidance; axons grow preferentially on surfaces that contain ALCAM. Mediates outgrowth and pathfinding for retinal ganglion cell axons. In Gallus gallus (Chicken), this protein is CD166 antigen (ALCAM).